The primary structure comprises 413 residues: 4-hydroxy-3-methylbut-2-en-1-yl diphosphate synthase (flavodoxin) (413 aa).

[4Fe-4S] cluster contacts are provided by Cys-305, Cys-308, Cys-351, and Glu-358.

This sequence belongs to the IspG family. [4Fe-4S] cluster serves as cofactor.

It catalyses the reaction (2E)-4-hydroxy-3-methylbut-2-enyl diphosphate + oxidized [flavodoxin] + H2O + 2 H(+) = 2-C-methyl-D-erythritol 2,4-cyclic diphosphate + reduced [flavodoxin]. It functions in the pathway isoprenoid biosynthesis; isopentenyl diphosphate biosynthesis via DXP pathway; isopentenyl diphosphate from 1-deoxy-D-xylulose 5-phosphate: step 5/6. Functionally, converts 2C-methyl-D-erythritol 2,4-cyclodiphosphate (ME-2,4cPP) into 1-hydroxy-2-methyl-2-(E)-butenyl 4-diphosphate. The protein is 4-hydroxy-3-methylbut-2-en-1-yl diphosphate synthase (flavodoxin) of Bartonella tribocorum (strain CIP 105476 / IBS 506).